Consider the following 387-residue polypeptide: tRNA N6-adenosine threonylcarbamoyltransferase (387 aa).

Positions 112 and 116 each coordinate Fe cation. Substrate contacts are provided by residues 134-138 (LASGG), Asp167, Gly180, and Asn325. Asp353 contributes to the Fe cation binding site.

It belongs to the KAE1 / TsaD family. It depends on Fe(2+) as a cofactor.

It is found in the cytoplasm. It carries out the reaction L-threonylcarbamoyladenylate + adenosine(37) in tRNA = N(6)-L-threonylcarbamoyladenosine(37) in tRNA + AMP + H(+). Functionally, required for the formation of a threonylcarbamoyl group on adenosine at position 37 (t(6)A37) in tRNAs that read codons beginning with adenine. Is involved in the transfer of the threonylcarbamoyl moiety of threonylcarbamoyl-AMP (TC-AMP) to the N6 group of A37, together with TsaE and TsaB. TsaD likely plays a direct catalytic role in this reaction. This chain is tRNA N6-adenosine threonylcarbamoyltransferase, found in Rickettsia prowazekii (strain Madrid E).